Reading from the N-terminus, the 253-residue chain is MVSSFTSAPRSGFYYFAQGWKLVSQPGIRRFVILPLLVNILLMGGAFWWLFTQLDVWIPTFMSYVPDWLQWLSYLLWPLAVISVLLVFGYFFSTIANWIAAPFNGLLAEQLEARLTGATPPDTGIFGIMKDVPRIMKREWQKFVWYLPRAIVLLILYFIPGIGQTVAPVLWFLFSAWMLAIQYCDYPFDNHKVPFKEMRTALRTRKITNMQFGALTSLFTMIPLLNLFIMPVAVCGATAMWVDCYRDKHAMWR.

A run of 4 helical transmembrane segments spans residues 31–51, 75–95, 151–171, and 222–242; these read FVIL…WWLF, LLWP…FSTI, IVLL…PVLW, and IPLL…AMWV.

It belongs to the CysZ family.

It is found in the cell inner membrane. In terms of biological role, high affinity, high specificity proton-dependent sulfate transporter, which mediates sulfate uptake. Provides the sulfur source for the cysteine synthesis pathway. This is Sulfate transporter CysZ from Shigella flexneri serotype 5b (strain 8401).